We begin with the raw amino-acid sequence, 178 residues long: MNVPNLLSLSRLILSPLILYFVLEENYLSSLVLVLFLALMDFLDGFFARKLNQSTRMGKILDPLADKVFTFFSLLSYTFFSKERLNPLIFFLLLGRDITLIIGGIFLIKRKFTPEPSIYGKFTTLFVSLSLLSVGILNVYDVNFLRILTNVLEIVSLILILVSWVDYTLKGFKMIFKE.

4 helical membrane passes run 28–48 (LSSL…GFFA), 88–108 (LIFF…IFLI), 125–145 (LFVS…VNFL), and 147–167 (ILTN…WVDY).

The protein belongs to the CDP-alcohol phosphatidyltransferase class-I family.

Its subcellular location is the cell membrane. The catalysed reaction is a CDP-1,2-diacyl-sn-glycerol + sn-glycerol 3-phosphate = a 1,2-diacyl-sn-glycero-3-phospho-(1'-sn-glycero-3'-phosphate) + CMP + H(+). It functions in the pathway phospholipid metabolism; phosphatidylglycerol biosynthesis; phosphatidylglycerol from CDP-diacylglycerol: step 1/2. In terms of biological role, this protein catalyzes the committed step to the synthesis of the acidic phospholipids. The polypeptide is CDP-diacylglycerol--glycerol-3-phosphate 3-phosphatidyltransferase (pgsA) (Aquifex aeolicus (strain VF5)).